Consider the following 328-residue polypeptide: MIEKIWSGESPLWRLLLPLSWLYGLVSGAIRLCYKLKLKRAWRAPVPVVVVGNLTAGGNGKTPVVVWLVEQLQQRGIRVGVVSRGYGGKAESYPLLLSADTTTAQAGDEPVLIYQRTDAPVAVSPVRSDAVKAILAQHPDVQIIVTDDGLQHYRLARDVEIVVIDGVRRFGNGWWLPAGPMRERAGRLKSVDAVIVNGGVPRSGEIPMHLLPGQAVNLRTGTRCDVAQLEHVVAMAGIGHPPRFFATLKMCGVQPEKCVPLADHQSLNHADVSALVSAGQTLVMTEKDAVKCRAFAEENWWYLPVDAQLSGDEPAKLLTQLTLLASGN.

Residue 55 to 62 (TAGGNGKT) coordinates ATP.

This sequence belongs to the LpxK family.

It carries out the reaction lipid A disaccharide (E. coli) + ATP = lipid IVA (E. coli) + ADP + H(+). It functions in the pathway glycolipid biosynthesis; lipid IV(A) biosynthesis; lipid IV(A) from (3R)-3-hydroxytetradecanoyl-[acyl-carrier-protein] and UDP-N-acetyl-alpha-D-glucosamine: step 6/6. Its function is as follows. Transfers the gamma-phosphate of ATP to the 4'-position of a tetraacyldisaccharide 1-phosphate intermediate (termed DS-1-P) to form tetraacyldisaccharide 1,4'-bis-phosphate (lipid IVA). The chain is Tetraacyldisaccharide 4'-kinase (lpxK) from Escherichia coli (strain K12).